The following is a 552-amino-acid chain: Capsid protein precursor (552 aa).

The interval 1–41 (MKQNDTKKTTQRRNSKKYSSKTNRGTKRAPRDQEVGTGAQE) is disordered. Residues 9–28 (TTQRRNSKKYSSKTNRGTKR) show a composition bias toward basic residues.

In terms of assembly, homodimer. In terms of processing, the 7 kDa polypeptide is acetylated. Post-translationally, autocatalytic proteolysis releases a post-translationally modified peptide that remains associated with nucleic acid within the virion. This peptide is observed only when nucleic acid is packaged in the capsid.

It is found in the virion. Functionally, the capsid protein self-assembles to form an icosahedral capsid with a T=2 symmetry made of 120 subunits. The polypeptide is Capsid protein precursor (Segment-1) (Human picobirnavirus (strain Human/Thailand/Hy005102/-) (PBV)).